Reading from the N-terminus, the 329-residue chain is Beta-tectorin (329 aa).

The N-terminal stretch at 1-17 (MVVRAFVLLALFAEASA) is a signal peptide. Residues 19 to 283 (SCTPNKADVI…LSCPVNCDKR (265 aa)) form the ZP domain. N-linked (GlcNAc...) asparagine glycans are attached at residues Asn80, Asn104, Asn116, and Asn145. Cys204 and Cys264 are joined by a disulfide. Ala305 carries the GPI-anchor amidated alanine lipid modification. A propeptide spans 306–329 (FSGLCDFSDVLLHLILMLGTWAVL) (removed in mature form).

In terms of assembly, may form homomeric filament after self-association or heteromeric filament after association with alpha-tectorin. Interacts with CEACAM16. The presence of a hydrophobic C-terminus preceded by a potential cleavage site strongly suggests that tectorins are synthesized as glycosylphosphatidylinositol-linked, membrane-bound precursors. Tectorins are targeted to the apical surface of the inner ear epithelia by the lipid and proteolytically released into the extracellular compartment.

The protein resides in the cell membrane. Its subcellular location is the secreted. The protein localises to the extracellular space. It localises to the extracellular matrix. Its function is as follows. One of the major non-collagenous components of the tectorial membrane. The tectorial membrane is an extracellular matrix of the inner ear that covers the neuroepithelium of the cochlea and contacts the stereocilia bundles of specialized sensory hair cells. Sound induces movement of these hair cells relative to the tectorial membrane, deflects the stereocilia and leads to fluctuations in hair-cell membrane potential, transducing sound into electrical signals. The chain is Beta-tectorin (Tectb) from Mus musculus (Mouse).